The primary structure comprises 427 residues: Serine hydroxymethyltransferase (427 aa).

(6S)-5,6,7,8-tetrahydrofolate contacts are provided by residues Leu122 and 126-128 (GHL). The residue at position 231 (Lys231) is an N6-(pyridoxal phosphate)lysine. Residues Glu247 and 355-357 (SPF) each bind (6S)-5,6,7,8-tetrahydrofolate.

This sequence belongs to the SHMT family. Homodimer. Requires pyridoxal 5'-phosphate as cofactor.

The protein localises to the cytoplasm. The catalysed reaction is (6R)-5,10-methylene-5,6,7,8-tetrahydrofolate + glycine + H2O = (6S)-5,6,7,8-tetrahydrofolate + L-serine. The protein operates within one-carbon metabolism; tetrahydrofolate interconversion. It functions in the pathway amino-acid biosynthesis; glycine biosynthesis; glycine from L-serine: step 1/1. Functionally, catalyzes the reversible interconversion of serine and glycine with tetrahydrofolate (THF) serving as the one-carbon carrier. This reaction serves as the major source of one-carbon groups required for the biosynthesis of purines, thymidylate, methionine, and other important biomolecules. Also exhibits THF-independent aldolase activity toward beta-hydroxyamino acids, producing glycine and aldehydes, via a retro-aldol mechanism. This Synechocystis sp. (strain ATCC 27184 / PCC 6803 / Kazusa) protein is Serine hydroxymethyltransferase.